The chain runs to 213 residues: Small ribosomal subunit protein uS3 (213 aa).

One can recognise a KH type-2 domain in the interval 38-106 (IRKYVKEKIF…EFALEVSEIR (69 aa)).

It belongs to the universal ribosomal protein uS3 family. Part of the 30S ribosomal subunit. Forms a tight complex with proteins S10 and S14.

In terms of biological role, binds the lower part of the 30S subunit head. Binds mRNA in the 70S ribosome, positioning it for translation. The protein is Small ribosomal subunit protein uS3 of Maridesulfovibrio salexigens (strain ATCC 14822 / DSM 2638 / NCIMB 8403 / VKM B-1763) (Desulfovibrio salexigens).